Reading from the N-terminus, the 2319-residue chain is AT-rich interactive domain-containing protein 1B (2319 aa).

Low complexity-rich tracts occupy residues M1–G21 and G43–P56. 6 disordered regions span residues M1–H74, V155–G306, A321–A414, R487–A546, Q577–T1062, and D1085–K1129. A2 bears the N-acetylalanine mark. Residues M57–L68 are compositionally biased toward gly residues. A compositionally biased stretch (basic residues) spans Q165–A188. Composition is skewed to low complexity over residues L189–H215 and S343–M363. Polar residues predominate over residues P365 to N379. Positions G388–A414 are enriched in gly residues. R487 bears the Asymmetric dimethylarginine mark. Residues A489–S510 are compositionally biased toward polar residues. Residues L502 to L506 carry the LXXLL motif. Residues P536–A546 are compositionally biased toward low complexity. 2 positions are modified to phosphoserine: S585 and S599. R608 is subject to Asymmetric dimethylarginine. Residues S620 to G630 show a composition bias toward low complexity. R640 carries the post-translational modification Asymmetric dimethylarginine. Low complexity-rich tracts occupy residues G651–Q670, Q677–Q687, P695–Q712, S767–S783, G811–S832, and G840–P849. Residues T866–T880 show a composition bias toward polar residues. Low complexity predominate over residues G881–G892. Polar residues-rich tracts occupy residues S899–Y923 and S947–S958. 2 stretches are compositionally biased toward low complexity: residues P980–S994 and E1014–Q1028. A compositionally biased stretch (polar residues) spans S1029–T1062. One can recognise an ARID domain in the interval E1136–E1227. Disordered stretches follow at residues E1230–M1334, E1346–K1443, N1475–S1647, and D1782–S1852. 2 stretches are compositionally biased toward polar residues: residues A1254–M1273 and S1287–I1304. Residues S1305 to P1319 are compositionally biased toward low complexity. Composition is skewed to polar residues over residues K1320–M1334 and P1364–M1388. Residues P1426 to P1440 are compositionally biased toward low complexity. A Nuclear localization signal motif is present at residues N1441 to D1460. Composition is skewed to polar residues over residues L1522–M1534 and E1579–P1601. Phosphoserine is present on residues S1625, S1638, and S1642. A compositionally biased stretch (polar residues) spans A1627–K1641. Over residues D1782–S1791 the composition is skewed to basic and acidic residues. At S1798 the chain carries Phosphoserine. The segment covering G1799–E1823 has biased composition (acidic residues). Residues A1842–S1852 show a composition bias toward basic and acidic residues. K1860 is subject to N6-acetyllysine. Disordered regions lie at residues F1904 to K1941 and R1954 to F1973. Basic and acidic residues predominate over residues R1925–E1940. Positions L2119–L2123 match the LXXLL motif.

As to quaternary structure, component of SWI/SNF chromatin remodeling complexes, in some of which it can be mutually exclusive with ARID1B/BAF250B. The canonical complex contains a catalytic subunit (either SMARCA4/BRG1/BAF190A or SMARCA2/BRM/BAF190B) and at least SMARCE1, ACTL6A/BAF53, SMARCC1/BAF155, SMARCC2/BAF170, and SMARCB1/SNF5/BAF47. Other subunits specific to each of the complexes may also be present permitting several possible combinations developmentally and tissue specific. Component of the BAF (SWI/SNF-A) complex, which includes at least actin (ACTB), ARID1A/BAF250A, ARID1B/BAF250B, SMARCA2/BRM, SMARCA4/BRG1/BAF190A, ACTL6A/BAF53, ACTL6B/BAF53B, SMARCE1/BAF57, SMARCC1/BAF155, SMARCC2/BAF170, SMARCB1/SNF5/INI1, and one or more SMARCD1/BAF60A, SMARCD2/BAF60B, or SMARCD3/BAF60C. In muscle cells, the BAF complex also contains DPF3. Component of neural progenitors-specific chromatin remodeling complex (npBAF complex) composed of at least, ARID1A/BAF250A or ARID1B/BAF250B, SMARCD1/BAF60A, SMARCD3/BAF60C, SMARCA2/BRM/BAF190B, SMARCA4/BRG1/BAF190A, SMARCB1/BAF47, SMARCC1/BAF155, SMARCE1/BAF57, SMARCC2/BAF170, PHF10/BAF45A, ACTL6A/BAF53A and actin. Component of neuron-specific chromatin remodeling complex (nBAF complex) composed of at least, ARID1A/BAF250A or ARID1B/BAF250B, SMARCD1/BAF60A, SMARCD3/BAF60C, SMARCA2/BRM/BAF190B, SMARCA4/BRG1/BAF190A, SMARCB1/BAF47, SMARCC1/BAF155, SMARCE1/BAF57, SMARCC2/BAF170, DPF1/BAF45B, DPF3/BAF45C, ACTL6B/BAF53B and actin. Component of a SWI/SNF-like EBAFb complex, at least composed of SMARCA4/BRG1/BAF190A, SMARCB1/BAF47/SNF5, ACTL6A/BAF53A, SMARCE1/BAF57, SMARCD1/BAF60A, SMARCD2/BAF60B, SMARCC1/BAF155, SMARCC2/BAF170, ARID1B/BAF250B, MLLT1/ENL and actin. Interacts through its C-terminus with SMARCA2/BRM/BAF190B and SMARCA4/BRG1/BAF190A. Interacts with SMARCC1/BAF155. Widely expressed with high levels in heart, skeletal muscle and kidney.

Its subcellular location is the nucleus. In terms of biological role, involved in transcriptional activation and repression of select genes by chromatin remodeling (alteration of DNA-nucleosome topology). Component of SWI/SNF chromatin remodeling complexes that carry out key enzymatic activities, changing chromatin structure by altering DNA-histone contacts within a nucleosome in an ATP-dependent manner. Belongs to the neural progenitors-specific chromatin remodeling complex (npBAF complex) and the neuron-specific chromatin remodeling complex (nBAF complex). During neural development a switch from a stem/progenitor to a postmitotic chromatin remodeling mechanism occurs as neurons exit the cell cycle and become committed to their adult state. The transition from proliferating neural stem/progenitor cells to postmitotic neurons requires a switch in subunit composition of the npBAF and nBAF complexes. As neural progenitors exit mitosis and differentiate into neurons, npBAF complexes which contain ACTL6A/BAF53A and PHF10/BAF45A, are exchanged for homologous alternative ACTL6B/BAF53B and DPF1/BAF45B or DPF3/BAF45C subunits in neuron-specific complexes (nBAF). The npBAF complex is essential for the self-renewal/proliferative capacity of the multipotent neural stem cells. The nBAF complex along with CREST plays a role regulating the activity of genes essential for dendrite growth. Binds DNA non-specifically. In Homo sapiens (Human), this protein is AT-rich interactive domain-containing protein 1B.